The sequence spans 431 residues: Ubiquitin-like modifier-activating enzyme 5 (431 aa).

Gly-92, Asp-113, Lys-136, Asn-159, and Asn-197 together coordinate ATP. Residues Cys-239 and Cys-242 each contribute to the Zn(2+) site. Catalysis depends on Cys-263, which acts as the Glycyl thioester intermediate. Positions 316 and 321 each coordinate Zn(2+). The segment at 339–396 (AKAKMEADASTTIDEGPLHDDNEWNISVVDDENEKDTTKAASSSDTLPEGLTRELPVA) is disordered.

The protein belongs to the ubiquitin-activating E1 family. UBA5 subfamily.

Its function is as follows. E1-like enzyme which activates UFM1. The sequence is that of Ubiquitin-like modifier-activating enzyme 5 from Arabidopsis thaliana (Mouse-ear cress).